The primary structure comprises 223 residues: Ribose-5-phosphate isomerase A (223 aa).

Substrate-binding positions include 28 to 31, 81 to 84, and 94 to 97; these read TGST, DGAD, and KGGG. Glutamate 103 serves as the catalytic Proton acceptor. A substrate-binding site is contributed by lysine 121.

The protein belongs to the ribose 5-phosphate isomerase family. As to quaternary structure, homodimer.

The enzyme catalyses aldehydo-D-ribose 5-phosphate = D-ribulose 5-phosphate. Its pathway is carbohydrate degradation; pentose phosphate pathway; D-ribose 5-phosphate from D-ribulose 5-phosphate (non-oxidative stage): step 1/1. Functionally, catalyzes the reversible conversion of ribose-5-phosphate to ribulose 5-phosphate. The polypeptide is Ribose-5-phosphate isomerase A (Ruthia magnifica subsp. Calyptogena magnifica).